The following is a 340-amino-acid chain: Alpha-1,4-N-acetylglucosaminyltransferase (340 aa).

At Met-1 to Glu-4 the chain is on the cytoplasmic side. Residues Leu-5–Leu-25 traverse the membrane as a helical; Signal-anchor for type II membrane protein segment. At Lys-26–Lys-340 the chain is on the lumenal side. Asn-99 and Asn-138 each carry an N-linked (GlcNAc...) asparagine glycan. Residues Asp-167–Asp-169 carry the DXD motif motif. N-linked (GlcNAc...) asparagine glycosylation is found at Asn-251 and Asn-282.

Belongs to the glycosyltransferase 32 family. In terms of tissue distribution, detected in stomach and pancreas.

It localises to the golgi apparatus membrane. The protein operates within protein modification; protein glycosylation. Its function is as follows. Catalyzes the transfer of N-acetylglucosamine (GlcNAc) to core 2 branched O-glycans. Necessary for the synthesis of type III mucin which is specifically produced in the stomach, duodenum, and pancreatic duct. May protect against inflammation-associated gastric adenocarcinomas. In Homo sapiens (Human), this protein is Alpha-1,4-N-acetylglucosaminyltransferase (A4GNT).